The chain runs to 430 residues: Cysteate synthase (430 aa).

Lys-106 carries the N6-(pyridoxal phosphate)lysine modification. The pyridoxal 5'-phosphate site is built by Asn-132 and Thr-381.

The protein belongs to the threonine synthase family. Cysteate synthase subfamily. As to quaternary structure, homotrimer. Pyridoxal 5'-phosphate serves as cofactor.

It catalyses the reaction O-phospho-L-serine + sulfite + H(+) = L-cysteate + phosphate. Its pathway is cofactor biosynthesis; coenzyme M biosynthesis. Its function is as follows. Specifically catalyzes the beta-elimination of phosphate from L-phosphoserine and the beta-addition of sulfite to the dehydroalanine intermediate to produce L-cysteate. This is Cysteate synthase from Methanoculleus marisnigri (strain ATCC 35101 / DSM 1498 / JR1).